A 1745-amino-acid polypeptide reads, in one-letter code: ADAMTS-like protein 1 (1745 aa).

An N-terminal signal peptide occupies residues 1 to 28 (MECCRRAAPGTPLLVLAFLLLSSRTARS). In terms of domain architecture, TSP type-1 1 spans 33 to 82 (EGLWDAWGPWSECSRTCGGGASYSLRRCLSSKSCEGRNIRYRTCSNVDCP). 3 cysteine pairs are disulfide-bonded: cysteine 45/cysteine 76, cysteine 49/cysteine 81, and cysteine 60/cysteine 66. Asparagine 251 is a glycosylation site (N-linked (GlcNAc...) asparagine). O-linked (Fuc...) serine glycosylation is found at serine 310 and serine 391. TSP type-1 domains lie at 376–424 (PLPR…MYTP), 436–493 (DCPK…TPCY), 522–584 (EEPS…GPCN), 607–667 (ELYD…DPCP), 703–762 (CPPA…KKDD), and 763–825 (CPSE…ATCA). Threonine 451 is a glycosylation site (O-linked (Fuc...) threonine). 3 disulfides stabilise this stretch: cysteine 534–cysteine 578, cysteine 538–cysteine 583, and cysteine 549–cysteine 567. 4 disulfide bridges follow: cysteine 775–cysteine 819, cysteine 779–cysteine 824, cysteine 790–cysteine 807, and cysteine 874–cysteine 922. One can recognise an Ig-like C2-type 1 domain in the interval 836–938 (PHIAAARNIY…EQFVIKLIGG (103 aa)). 2 disordered regions span residues 966–991 (EALQ…GLTA) and 1114–1137 (VSGF…RPHR). Positions 1115-1126 (SGFSSSLRSSSG) are enriched in low complexity. 3 Ig-like C2-type domains span residues 1139-1241 (PAIL…IAVT), 1261-1352 (PTVT…TQLL), and 1378-1468 (PSVL…ASLV). Cystine bridges form between cysteine 1177–cysteine 1225, cysteine 1283–cysteine 1336, and cysteine 1401–cysteine 1452. 2 TSP type-1 domains span residues 1528-1591 (CPSR…QLCV) and 1649-1709 (CSVH…TPCE). In terms of domain architecture, PLAC spans 1709 to 1745 (ENTECRDTTRYCEKVRQLKLCQLGQFRSRCCGTCGKA).

In terms of assembly, monomer. Post-translationally, glycosylated. O-fucosylated by POFUT2 on a serine or a threonine residue found within the consensus sequence C1-X(2)-(S/T)-C2-G of the TSP type-1 repeat domains where C1 and C2 are the first and second cysteine residue of the repeat, respectively. Fucosylated repeats can then be further glycosylated by the addition of a beta-1,3-glucose residue by the glucosyltransferase, B3GALTL. Fucosylation mediates the efficient secretion of ADAMTS family members. Can also be C-glycosylated with one or two mannose molecules on tryptophan residues within the consensus sequence W-X-X-W of the TPRs, and N-glycosylated. These other glycosylations can also facilitate secretion. Disulfide bonds are present.

Its subcellular location is the secreted. The protein localises to the extracellular space. The protein resides in the extracellular matrix. The chain is ADAMTS-like protein 1 (Adamtsl1) from Mus musculus (Mouse).